Reading from the N-terminus, the 189-residue chain is Elongation factor P (189 aa).

Residue Lys34 is modified to N6-(3,6-diaminohexanoyl)-5-hydroxylysine.

The protein belongs to the elongation factor P family. May be beta-lysylated on the epsilon-amino group of Lys-34 by the combined action of EpmA and EpmB, and then hydroxylated on the C5 position of the same residue by EpmC (if this protein is present). Lysylation is critical for the stimulatory effect of EF-P on peptide-bond formation. The lysylation moiety may extend toward the peptidyltransferase center and stabilize the terminal 3-CCA end of the tRNA. Hydroxylation of the C5 position on Lys-34 may allow additional potential stabilizing hydrogen-bond interactions with the P-tRNA.

The protein localises to the cytoplasm. It functions in the pathway protein biosynthesis; polypeptide chain elongation. Functionally, involved in peptide bond synthesis. Alleviates ribosome stalling that occurs when 3 or more consecutive Pro residues or the sequence PPG is present in a protein, possibly by augmenting the peptidyl transferase activity of the ribosome. Modification of Lys-34 is required for alleviation. The polypeptide is Elongation factor P (Idiomarina loihiensis (strain ATCC BAA-735 / DSM 15497 / L2-TR)).